A 322-amino-acid chain; its full sequence is Quinolinate synthase (322 aa).

H37 and S54 together coordinate iminosuccinate. C99 is a binding site for [4Fe-4S] cluster. Iminosuccinate-binding positions include 125–127 (YIN) and S142. C185 serves as a coordination point for [4Fe-4S] cluster. Iminosuccinate contacts are provided by residues 211 to 213 (HPE) and T228. C278 provides a ligand contact to [4Fe-4S] cluster.

The protein belongs to the quinolinate synthase family. Type 2 subfamily. [4Fe-4S] cluster is required as a cofactor.

The protein resides in the cytoplasm. It carries out the reaction iminosuccinate + dihydroxyacetone phosphate = quinolinate + phosphate + 2 H2O + H(+). Its pathway is cofactor biosynthesis; NAD(+) biosynthesis; quinolinate from iminoaspartate: step 1/1. Its function is as follows. Catalyzes the condensation of iminoaspartate with dihydroxyacetone phosphate to form quinolinate. The polypeptide is Quinolinate synthase (Prosthecochloris aestuarii (strain DSM 271 / SK 413)).